The primary structure comprises 513 residues: Coiled-coil domain-containing protein 102B (513 aa).

The required for centriolar localization and for interaction with CEP250, CROCC, LRRC45 and NEK2 stretch occupies residues 1-217 (MNLDSIHRLI…IDSLKLSEEM (217 aa)). 7 positions are modified to phosphoserine: Ser-21, Ser-22, Ser-34, Ser-135, Ser-142, Ser-194, and Ser-210. Positions 72 to 142 (ELRLRELEEV…ELSTLKKKQS (71 aa)) form a coiled coil. Coiled coils occupy residues 268 to 337 (QKIL…ESKS) and 363 to 513 (WDKR…LQNW). Phosphoserine is present on residues Ser-401, Ser-404, and Ser-406. Residues 493-513 (LDEEKERNENLETELRHLQNW) are disordered.

As to quaternary structure, interacts (via N-terminus) with centriolar protein CEP250/CNAP1; the interaction results in recruitment of CCDC102B to the proximal ends of centrioles. Interacts (via N-terminus) with CROCC/rootletin and LRRC45. Interacts (via N-terminus) with serine/threonine-protein kinase NEK2; the interaction results in phosphorylation of CCDC102B. Phosphorylated directly or indirectly by NEK2 during mitosis which causes dissociation of CCDC102B from the centrosome and allows for centrosome separation.

Its subcellular location is the cytoplasm. It localises to the cytoskeleton. The protein resides in the microtubule organizing center. It is found in the centrosome. The protein localises to the centriole. Its function is as follows. During interphase, forms fibers at the proximal ends of centrioles to maintain centrosome cohesion. During mitosis, dissociates from the centrosome following phosphorylation to allow centrosome separation. Contributes to CROCC/rootletin filament formation. The polypeptide is Coiled-coil domain-containing protein 102B (CCDC102B) (Homo sapiens (Human)).